Here is a 113-residue protein sequence, read N- to C-terminus: Nitrogenase vanadium-iron protein delta chain (113 aa).

Hexamer of two alpha, two beta, and two delta chains. Requires iron-sulfur cluster as cofactor. Vanadium cation is required as a cofactor.

The catalysed reaction is N2 + 8 reduced [2Fe-2S]-[ferredoxin] + 16 ATP + 16 H2O = H2 + 8 oxidized [2Fe-2S]-[ferredoxin] + 2 NH4(+) + 16 ADP + 16 phosphate + 6 H(+). Its function is as follows. The key enzymatic reactions in nitrogen fixation are catalyzed by the nitrogenase complex, which has 2 components: the iron protein (component 2) and a component 1 which is either a molybdenum-iron protein, a vanadium-iron, or an iron-iron protein. The sequence is that of Nitrogenase vanadium-iron protein delta chain (vnfG) from Azotobacter salinestris.